Here is a 598-residue protein sequence, read N- to C-terminus: Vanadium-dependent bromoperoxidase (598 aa).

Ca(2+) is bound by residues Phe-361, Gln-363, Asp-365, Asp-368, and Gln-370. Vanadate is bound by residues Lys-400 and Arg-408. His-480 is a catalytic residue. Residues Ser-485, Gly-486, His-487, Arg-547, and His-553 each coordinate vanadate. His-487 is a catalytic residue.

This sequence belongs to the vanadium-dependent haloperoxidase family. Homododecamer. Ca(2+) is required as a cofactor. Vanadate serves as cofactor.

It carries out the reaction RH + Br(-) + H2O2 = RBr + 2 H2O.. Its function is as follows. Catalyzes the halogenation of organic substrates in the presence of hydrogen peroxide. The polypeptide is Vanadium-dependent bromoperoxidase (Corallina officinalis (Coral seaweed)).